A 412-amino-acid polypeptide reads, in one-letter code: Peptidase T (412 aa).

His-81 lines the Zn(2+) pocket. The active site involves Asp-83. Asp-144 contacts Zn(2+). Glu-178 (proton acceptor) is an active-site residue. Zn(2+) contacts are provided by Glu-179, Asp-201, and His-383.

The protein belongs to the peptidase M20B family. It depends on Zn(2+) as a cofactor.

The protein localises to the cytoplasm. It carries out the reaction Release of the N-terminal residue from a tripeptide.. In terms of biological role, cleaves the N-terminal amino acid of tripeptides. The sequence is that of Peptidase T from Bacillus cereus (strain ZK / E33L).